A 150-amino-acid polypeptide reads, in one-letter code: UPF0756 membrane protein Dd703_1075 (150 aa).

4 helical membrane-spanning segments follow: residues leucine 8 to leucine 28, tyrosine 51 to glycine 71, alanine 81 to glycine 101, and valine 114 to valine 134.

It belongs to the UPF0756 family.

It localises to the cell membrane. The sequence is that of UPF0756 membrane protein Dd703_1075 from Musicola paradisiaca (strain Ech703) (Dickeya paradisiaca).